We begin with the raw amino-acid sequence, 278 residues long: Urease accessory protein UreD (278 aa).

This sequence belongs to the UreD family. UreD, UreF and UreG form a complex that acts as a GTP-hydrolysis-dependent molecular chaperone, activating the urease apoprotein by helping to assemble the nickel containing metallocenter of UreC. The UreE protein probably delivers the nickel.

It is found in the cytoplasm. Functionally, required for maturation of urease via the functional incorporation of the urease nickel metallocenter. This Staphylococcus aureus (strain bovine RF122 / ET3-1) protein is Urease accessory protein UreD.